The sequence spans 947 residues: Glutamate receptor 2.8 (947 aa).

A signal peptide spans 1–26; that stretch reads MNPKKNNNTFLSYFVCLFLLLEVGLG. Over 27–577 the chain is Extracellular; the sequence is QNQISEIKVG…NTWVFLKPWG (551 aa). Asn42, Asn118, Asn333, Asn341, Asn348, Asn420, Asn478, and Asn524 each carry an N-linked (GlcNAc...) asparagine glycan. A helical membrane pass occupies residues 578 to 598; that stretch reads LDLWVTTACFFVLIGFVVWLF. Over 599 to 607 the chain is Cytoplasmic; the sequence is EHRVNTDFR. The chain crosses the membrane as a helical span at residues 608–628; it reads GPPHHQIGTSFWFSFSTMVFA. Residues 629–632 lie on the Cytoplasmic side of the membrane; the sequence is HREK. Residues 633–653 form a helical membrane-spanning segment; sequence VVSNLARFVVVVWCFVVLVLT. The Extracellular portion of the chain corresponds to 654–819; that stretch reads QSYTANLTSF…NRLSLRSFWG (166 aa). N-linked (GlcNAc...) asparagine glycosylation is found at Asn659, Asn704, Asn723, and Asn779. The helical transmembrane segment at 820-840 threads the bilayer; the sequence is LFLIAGIASFLALLIFVFLFL. At 841-947 the chain is on the cytoplasmic side; sequence YENRHTLCDD…ESDIECVVEQ (107 aa).

The protein belongs to the glutamate-gated ion channel (TC 1.A.10.1) family. May form heteromers. In terms of tissue distribution, expressed predominantly in leaves.

It is found in the membrane. Functionally, glutamate-gated receptor that probably acts as a non-selective cation channel. May be involved in light-signal transduction and calcium homeostasis via the regulation of calcium influx into cells. The sequence is that of Glutamate receptor 2.8 (GLR2.8) from Arabidopsis thaliana (Mouse-ear cress).